Reading from the N-terminus, the 764-residue chain is Nucleolar complex-associated protein 2 (764 aa).

Residues 3–69 (AKDDKKRVKK…EEELKRLQEK (67 aa)) adopt a coiled-coil conformation. Disordered regions lie at residues 23 to 67 (ELNN…KRLQ), 89 to 113 (ATEI…EGDD), 627 to 646 (AVFG…DRME), and 651 to 726 (AFNS…EDDA). Over residues 30–41 (IDAHDIVMEQKS) the composition is skewed to basic and acidic residues. Residues 42–51 (DKKRGKKVKS) are compositionally biased toward basic residues. The span at 52-67 (KKAEAEEHEEELKRLQ) shows a compositional bias: basic and acidic residues. Positions 90 to 113 (TEIEDDADVEPDTDLEDTEKEGDD) are enriched in acidic residues. Residues 661–672 (DSKEKEPEEEKT) show a composition bias toward basic and acidic residues. Positions 673–680 (KKKKRKRG) match the Nuclear localization signal 1 motif. Over residues 673-682 (KKKKRKRGGK) the composition is skewed to basic residues. The segment covering 693–726 (GLGEDDVVEDFVLSSDEEEEDLFDIGGDKDEDDA) has biased composition (acidic residues). Positions 738–745 (SKKTKGTY) match the Nuclear localization signal 2 motif.

This sequence belongs to the NOC2 family. Component of nucleolar complexes. Forms homodimers. Interacts with RBL and NOC3 in both the nucleolus and nucleoplasm. Binds to SWA2.

Its subcellular location is the nucleus. It is found in the nucleolus. The protein resides in the nucleoplasm. Functionally, together with SWA2, probably involved in pre-ribosome export from the nucleus to the cytoplasm. The sequence is that of Nucleolar complex-associated protein 2 from Arabidopsis thaliana (Mouse-ear cress).